Consider the following 386-residue polypeptide: O-methyltransferase 11 (386 aa).

5 residues coordinate S-adenosyl-L-homocysteine: Ser207, Gly231, Asp254, Asp274, and Lys288. Asp254 provides a ligand contact to S-adenosyl-L-methionine. His292 (proton acceptor) is an active-site residue.

The protein belongs to the class I-like SAM-binding methyltransferase superfamily. Cation-independent O-methyltransferase family. Homodimer.

The catalysed reaction is dopamine + S-adenosyl-L-methionine = 4-methoxytyramine + S-adenosyl-L-homocysteine + H(+). It catalyses the reaction 3,4-dihydroxy-5-methoxyphenethylamine + S-adenosyl-L-methionine = 3-hydroxy-4,5-dimethoxyphenethylamine + S-adenosyl-L-homocysteine + H(+). The enzyme catalyses 3-hydroxy-4,5-dimethoxyphenethylamine + S-adenosyl-L-methionine = mescaline + S-adenosyl-L-homocysteine + H(+). It carries out the reaction 4-hydroxy-3,5-dimethoxyphenethylamine + S-adenosyl-L-methionine = mescaline + S-adenosyl-L-homocysteine + H(+). It participates in aromatic compound metabolism. The protein operates within alkaloid biosynthesis. Functionally, O-methyltransferase participating in the biosynthesis of natural products derived from phenylethylamine, including mescaline, a natural hallucinogen potentially used in psychotherapeutic treatments. Catalyzes the O-methylation of mescaline para hydroxyl groups, using dopamine, 3,4-dihydroxy-5-methoxyphenethylamine, 3-hydroxy-4,5-dimethoxyphenethylamine and 4-hydroxy-3,5-dimethoxyphenethylamine as substrates. The sequence is that of O-methyltransferase 11 from Lophophora williamsii (Peyote).